Consider the following 92-residue polypeptide: Small ribosomal subunit protein uS19 (92 aa).

Belongs to the universal ribosomal protein uS19 family.

Its function is as follows. Protein S19 forms a complex with S13 that binds strongly to the 16S ribosomal RNA. This Paracoccus denitrificans (strain Pd 1222) protein is Small ribosomal subunit protein uS19.